The primary structure comprises 263 residues: Polyglutamine-binding protein 1 (263 aa).

A WW domain is found at 46–80 (EGLPPSWYKVFDPSCGLPYYWNVETDLVSWLSPHD). The tract at residues 94-263 (NNNADAEDKS…AEASRTKQQD (170 aa)) is disordered. Basic and acidic residues predominate over residues 99–173 (AEDKSDRNLE…DKADREEGKD (75 aa)). One copy of the 1-1; approximate repeat lies at 104–110 (DRNLEKV). A 5 X 7 AA approximate tandem repeats of D-R-[NS]-H-E-K-S region spans residues 104-138 (DRNLEKVDRNHEKSDRSHEKPDRSHEKADRNHEKN). Residues 111-117 (DRNHEKS) form a 1-2 repeat. A 1-3; approximate repeat occupies 118–124 (DRSHEKP). The stretch at 125–131 (DRSHEKA) is one 1-4; approximate repeat. The stretch at 132–138 (DRNHEKN) is one 1-5; approximate repeat. Repeat copies occupy residues 139 to 140 (DR), 141 to 142 (ER), 143 to 144 (ER), 150 to 151 (DR), 152 to 153 (ER), 154 to 155 (DR), 156 to 157 (DR), 158 to 159 (ER), and 160 to 161 (ER). Residues 139–144 (DRERER) form a 3 X 2 AA tandem repeats of [DE]-R region. Positions 150–161 (DRERDRDRERER) are 6 X 2 AA tandem repeats of [DE]-R. Positions 243–253 (YPSPGAVLRAN) are important for interaction with TXNL4A. At Ser-245 the chain carries Phosphoserine.

As to quaternary structure, interacts with POU3F2/Brn-2, ATXN1, TXNL4A, HTT and AR. Interaction with ATXN1 correlates positively with the length of the polyglutamine tract. Interacts with RNA polymerase II large subunit in a phosphorylation-dependent manner. Forms a ternary complex with ATXN1 mutant and phosphorylated RNA polymerase II. Interacts (via C-terminus) with TXNL4A and CD2BP2. Interacts (via WW domain) with ATN1 and SF3B1, and may interact with additional splice factors. Interacts (via WW domain) with WBP11; Leading to reduce interaction between PQBP1 and TXNL4A. Interacts with CAPRIN1. Interacts with DDX1. Interacts with SFPQ. Interacts with KHSRP. As to expression, detected in brain cortex and hippocampus neurons (at protein level). Expressed in brain with high level in cerebellar cortex, hippocampus and olfactory bulb.

It localises to the nucleus. It is found in the nucleus speckle. The protein resides in the cytoplasmic granule. Its function is as follows. Intrinsically disordered protein that acts as a scaffold, and which is involved in different processes, such as pre-mRNA splicing, transcription regulation, innate immunity and neuron development. Interacts with splicing-related factors via the intrinsically disordered region and regulates alternative splicing of target pre-mRNA species. May suppress the ability of POU3F2 to transactivate the DRD1 gene in a POU3F2 dependent manner. Can activate transcription directly or via association with the transcription machinery. May be involved in ATXN1 mutant-induced cell death. The interaction with ATXN1 mutant reduces levels of phosphorylated RNA polymerase II large subunit. Involved in the assembly of cytoplasmic stress granule, possibly by participating in the transport of neuronal RNA granules. Also acts as an innate immune sensor of infection by retroviruses, by detecting the presence of reverse-transcribed DNA in the cytosol. Directly binds retroviral reverse-transcribed DNA in the cytosol and interacts with CGAS, leading to activate the cGAS-STING signaling pathway, triggering type-I interferon production. This Mus musculus (Mouse) protein is Polyglutamine-binding protein 1 (Pqbp1).